A 388-amino-acid polypeptide reads, in one-letter code: Chorismate synthase (388 aa).

NADP(+) contacts are provided by Arg39 and Arg45. Residues 132–134 (RSS), 251–252 (NA), Gly296, 311–315 (KPIPT), and Arg337 each bind FMN.

Belongs to the chorismate synthase family. In terms of assembly, homotetramer. Requires FMNH2 as cofactor.

The enzyme catalyses 5-O-(1-carboxyvinyl)-3-phosphoshikimate = chorismate + phosphate. The protein operates within metabolic intermediate biosynthesis; chorismate biosynthesis; chorismate from D-erythrose 4-phosphate and phosphoenolpyruvate: step 7/7. Its function is as follows. Catalyzes the anti-1,4-elimination of the C-3 phosphate and the C-6 proR hydrogen from 5-enolpyruvylshikimate-3-phosphate (EPSP) to yield chorismate, which is the branch point compound that serves as the starting substrate for the three terminal pathways of aromatic amino acid biosynthesis. This reaction introduces a second double bond into the aromatic ring system. The sequence is that of Chorismate synthase from Staphylococcus aureus (strain bovine RF122 / ET3-1).